The primary structure comprises 415 residues: MIDRKLLLQDFDKVAHSLKKRNSVIDDGLERLREIITHYKKQLIELESLQAFQNKVSKEFGIKMTQKVDASDLKKELENNKIKLNELSKSVSELEQKIDLKLSIIPNLVDEKTPLGTSEEDNIEIKKILTPRDFTFTPKEHFELAQKNGWIDFESGVKLAKSRFSVIRGFGAKVYRALIHLMLDFNEKNGFEIIYTPALVNEKMLFGTGQLPKFKEDVFKIENENLYLIPTAEVTLTNLYNDTIISVEKLPIKMTAHTPCFRSEAGSAGKDTRGMIRQHQFDKVELVAITHPKESDVMQEYMLESASGILKALELPHRFVQLCSGDLGFSASNTIDIEVWLPGQNCYREISSVSNTRDFQARRAKIRFKENQKNQLVHTLNGSSLAVGRTMVALMENHQQADGSIHIPKALEKYL.

231 to 233 (TAE) provides a ligand contact to L-serine. 262–264 (RSE) provides a ligand contact to ATP. Glutamate 285 provides a ligand contact to L-serine. An ATP-binding site is contributed by 349–352 (EISS). An L-serine-binding site is contributed by serine 383.

This sequence belongs to the class-II aminoacyl-tRNA synthetase family. Type-1 seryl-tRNA synthetase subfamily. In terms of assembly, homodimer. The tRNA molecule binds across the dimer.

It localises to the cytoplasm. The catalysed reaction is tRNA(Ser) + L-serine + ATP = L-seryl-tRNA(Ser) + AMP + diphosphate + H(+). The enzyme catalyses tRNA(Sec) + L-serine + ATP = L-seryl-tRNA(Sec) + AMP + diphosphate + H(+). It functions in the pathway aminoacyl-tRNA biosynthesis; selenocysteinyl-tRNA(Sec) biosynthesis; L-seryl-tRNA(Sec) from L-serine and tRNA(Sec): step 1/1. Its function is as follows. Catalyzes the attachment of serine to tRNA(Ser). Is also able to aminoacylate tRNA(Sec) with serine, to form the misacylated tRNA L-seryl-tRNA(Sec), which will be further converted into selenocysteinyl-tRNA(Sec). The polypeptide is Serine--tRNA ligase (Helicobacter acinonychis (strain Sheeba)).